The following is a 1047-amino-acid chain: Carbamoyl phosphate synthase arginine-specific large chain (1047 aa).

The segment at 1–401 (MPKRTDIQSV…GLQKAVRSLE (401 aa)) is carboxyphosphate synthetic domain. Residues Arg129, Arg169, Gly175, Gly176, Lys208, Ile210, Glu215, Gly241, Val242, His243, Gln284, and Glu298 each contribute to the ATP site. Residues 133-327 (RQLMHELHEP…IARMAAKLSL (195 aa)) enclose the ATP-grasp 1 domain. Mg(2+) contacts are provided by Gln284, Glu298, and Asn300. Residues Gln284, Glu298, and Asn300 each contribute to the Mn(2+) site. Positions 402 to 549 (IKTHGLSLPS…YSSWTGENDL (148 aa)) are oligomerization domain. Residues 550–933 (LLPEKAKERV…AFRKAFAWGE (384 aa)) are carbamoyl phosphate synthetic domain. Positions 676-865 (YEFMRSVEVP…LITYTIDVLF (190 aa)) constitute an ATP-grasp 2 domain. Positions 712, 750, 756, 781, 782, 783, 784, 824, and 836 each coordinate ATP. Gln824, Glu836, and Asn838 together coordinate Mg(2+). 3 residues coordinate Mn(2+): Gln824, Glu836, and Asn838. The segment at 934–1047 (EQTPALFRKK…PFLLPDVVMN (114 aa)) is allosteric domain. The region spanning 937-1047 (PALFRKKGSV…PFLLPDVVMN (111 aa)) is the MGS-like domain.

This sequence belongs to the CarB family. In terms of assembly, composed of two chains; the small (or glutamine) chain promotes the hydrolysis of glutamine to ammonia, which is used by the large (or ammonia) chain to synthesize carbamoyl phosphate. Tetramer of heterodimers (alpha,beta)4. It depends on Mg(2+) as a cofactor. Mn(2+) is required as a cofactor.

It catalyses the reaction hydrogencarbonate + L-glutamine + 2 ATP + H2O = carbamoyl phosphate + L-glutamate + 2 ADP + phosphate + 2 H(+). It carries out the reaction hydrogencarbonate + NH4(+) + 2 ATP = carbamoyl phosphate + 2 ADP + phosphate + 2 H(+). It participates in amino-acid biosynthesis; L-arginine biosynthesis; carbamoyl phosphate from bicarbonate: step 1/1. Functionally, large subunit of the glutamine-dependent carbamoyl phosphate synthetase (CPSase). CPSase catalyzes the formation of carbamoyl phosphate from the ammonia moiety of glutamine, carbonate, and phosphate donated by ATP, constituting the first step of the biosynthetic pathway leading to arginine and/or urea. The large subunit (synthetase) binds the substrates ammonia (free or transferred from glutamine from the small subunit), hydrogencarbonate and ATP and carries out an ATP-coupled ligase reaction, activating hydrogencarbonate by forming carboxy phosphate which reacts with ammonia to form carbamoyl phosphate. In Halalkalibacterium halodurans (strain ATCC BAA-125 / DSM 18197 / FERM 7344 / JCM 9153 / C-125) (Bacillus halodurans), this protein is Carbamoyl phosphate synthase arginine-specific large chain.